The sequence spans 82 residues: Small ribosomal subunit protein bS16 (82 aa).

It belongs to the bacterial ribosomal protein bS16 family.

This chain is Small ribosomal subunit protein bS16, found in Saccharophagus degradans (strain 2-40 / ATCC 43961 / DSM 17024).